A 524-amino-acid chain; its full sequence is General transcription factor IIF subunit 1 (524 aa).

2 disordered regions span residues 56-76 (MYQE…RKQR) and 181-462 (RLKD…IQLT). Positions 242–257 (KPQKKVPAKGGKKKKR) are enriched in basic residues. Over residues 262-289 (EALEDSDDGDFEGQEVDYMSDESSSDEE) the composition is skewed to acidic residues. Over residues 290-307 (LPGKIKPAKEEEGPKGLD) the composition is skewed to basic and acidic residues. Composition is skewed to acidic residues over residues 308–327 (EQSE…EEGE) and 347–358 (SDESETSEDSDI). Residues 368–378 (QKKKTPPKKDK) are compositionally biased toward basic residues. Low complexity predominate over residues 381–397 (GSNSSSRGNSRPGTPSP). Residues 436–459 (PQNTSGKSTPQPQSGKSTPSSGDI) show a composition bias toward polar residues.

Belongs to the TFIIF alpha subunit family. As to quaternary structure, heterodimer of an alpha and a beta subunit. Post-translationally, phosphorylated on Ser and other residues by TAF1 and casein kinase II-like kinases.

It localises to the nucleus. Its function is as follows. TFIIF is a general transcription initiation factor that binds to RNA polymerase II and helps to recruit it to the initiation complex in collaboration with TFIIB. It promotes transcription elongation. The polypeptide is General transcription factor IIF subunit 1 (gtf2f1) (Xenopus laevis (African clawed frog)).